The chain runs to 333 residues: Probable pyridoxal reductase 2 (333 aa).

Y52 acts as the Proton donor in catalysis.

Belongs to the aldo/keto reductase family.

It is found in the cytoplasm. It carries out the reaction pyridoxine + NADP(+) = pyridoxal + NADPH + H(+). Catalyzes the reduction of pyridoxal (PL) with NADPH and oxidation of pyridoxine (PN) with NADP(+). This chain is Probable pyridoxal reductase 2, found in Schizosaccharomyces pombe (strain 972 / ATCC 24843) (Fission yeast).